The following is a 142-amino-acid chain: Hemoglobin subunit pi (142 aa).

A Globin domain is found at 2–142; sequence TLTQAEKAAV…VSSVLTEKYR (141 aa). Heme b-binding residues include His-59 and His-88.

Belongs to the globin family.

Its function is as follows. The pi' chain is the counterpart of the alpha chain in the major early embryonic hemoglobin P. The chain is Hemoglobin subunit pi from Cairina moschata (Muscovy duck).